A 332-amino-acid polypeptide reads, in one-letter code: Phosphate acyltransferase (332 aa).

The protein belongs to the PlsX family. Homodimer. Probably interacts with PlsY.

The protein localises to the cytoplasm. The enzyme catalyses a fatty acyl-[ACP] + phosphate = an acyl phosphate + holo-[ACP]. It participates in lipid metabolism; phospholipid metabolism. Catalyzes the reversible formation of acyl-phosphate (acyl-PO(4)) from acyl-[acyl-carrier-protein] (acyl-ACP). This enzyme utilizes acyl-ACP as fatty acyl donor, but not acyl-CoA. This Thermoanaerobacter pseudethanolicus (strain ATCC 33223 / 39E) (Clostridium thermohydrosulfuricum) protein is Phosphate acyltransferase.